Reading from the N-terminus, the 336-residue chain is Holliday junction branch migration complex subunit RuvB (336 aa).

Residues 1 to 182 (MKERIVNLET…FGMSFRMQFY (182 aa)) are large ATPase domain (RuvB-L). ATP is bound by residues leucine 21, arginine 22, glycine 63, lysine 66, threonine 67, serine 68, 129 to 131 (EDF), arginine 172, tyrosine 182, and arginine 219. Position 67 (threonine 67) interacts with Mg(2+). The tract at residues 183-253 (SPSELALIIK…ITLHALNELG (71 aa)) is small ATPAse domain (RuvB-S). Residues 256–336 (ELGFDEADLA…IPTLKSQSLF (81 aa)) are head domain (RuvB-H). 2 residues coordinate DNA: arginine 310 and arginine 315.

The protein belongs to the RuvB family. Homohexamer. Forms an RuvA(8)-RuvB(12)-Holliday junction (HJ) complex. HJ DNA is sandwiched between 2 RuvA tetramers; dsDNA enters through RuvA and exits via RuvB. An RuvB hexamer assembles on each DNA strand where it exits the tetramer. Each RuvB hexamer is contacted by two RuvA subunits (via domain III) on 2 adjacent RuvB subunits; this complex drives branch migration. In the full resolvosome a probable DNA-RuvA(4)-RuvB(12)-RuvC(2) complex forms which resolves the HJ.

Its subcellular location is the cytoplasm. It catalyses the reaction ATP + H2O = ADP + phosphate + H(+). The RuvA-RuvB-RuvC complex processes Holliday junction (HJ) DNA during genetic recombination and DNA repair, while the RuvA-RuvB complex plays an important role in the rescue of blocked DNA replication forks via replication fork reversal (RFR). RuvA specifically binds to HJ cruciform DNA, conferring on it an open structure. The RuvB hexamer acts as an ATP-dependent pump, pulling dsDNA into and through the RuvAB complex. RuvB forms 2 homohexamers on either side of HJ DNA bound by 1 or 2 RuvA tetramers; 4 subunits per hexamer contact DNA at a time. Coordinated motions by a converter formed by DNA-disengaged RuvB subunits stimulates ATP hydrolysis and nucleotide exchange. Immobilization of the converter enables RuvB to convert the ATP-contained energy into a lever motion, pulling 2 nucleotides of DNA out of the RuvA tetramer per ATP hydrolyzed, thus driving DNA branch migration. The RuvB motors rotate together with the DNA substrate, which together with the progressing nucleotide cycle form the mechanistic basis for DNA recombination by continuous HJ branch migration. Branch migration allows RuvC to scan DNA until it finds its consensus sequence, where it cleaves and resolves cruciform DNA. In Helicobacter acinonychis (strain Sheeba), this protein is Holliday junction branch migration complex subunit RuvB.